The following is a 708-amino-acid chain: RUN and FYVE domain-containing protein 1 (708 aa).

Basic and acidic residues predominate over residues 1-17 (MADREGGCAAGRGRELE). A disordered region spans residues 1 to 57 (MADREGGCAAGRGRELEPELEPGPGPGSALEPGEEFEIVDRSQLPGPGDLRSATRPR). Positions 139-271 (DADHAPLQQF…LDANLCLKGE (133 aa)) constitute an RUN domain. Residues 321–374 (TVGDLQTKIDGLEKTNSKLQEELSAATDRICSLQEEQQQLREQNELIRERSEKS) are a coiled coil. Residues Tyr-389 and Tyr-400 each carry the phosphotyrosine modification. The stretch at 405-617 (KQLKEEKKVR…QALQEMGLHL (213 aa)) forms a coiled coil. Residues 493–522 (QVMSSMKQMEERLQHSERARQGAEERSHKL) form a disordered region. Residues 500 to 522 (QMEERLQHSERARQGAEERSHKL) are compositionally biased toward basic and acidic residues. Positions 615 to 625 (LHLSQSKLKME) are interaction with RAB4. The residue at position 620 (Ser-620) is a Phosphoserine. The segment at 642–700 (DDEATHCRQCEKEFSISRRKHHCRNCGHIFCNTCSSNELALPSYPKPVRVCDSCHTLLL) adopts an FYVE-type zinc-finger fold. Zn(2+) contacts are provided by Cys-648, Cys-651, Cys-664, Cys-667, Cys-672, Cys-675, Cys-692, and Cys-695.

Self-assembles through coiled coil domains to drive ELVA (endo-lysosomal vesicular assembly) formation. Interacts with BMX. May interact with SSB. Interacts with RAB4 and RAB5 that have been activated by GTP-binding. Interacts WITH RAB14 and RAB4B (GTP-bound form); the interactions allow endosomal tethering and fusion. Interacts with ARL8B (GTP-bound form); the interaction is required for RUFY1 endosomal location and promotes interaction with RAB14. In terms of processing, phosphorylation on Tyr-389 and/or Tyr-400 is required for interaction with BMX and endosomal targeting. In terms of tissue distribution, broadly expressed, with highest levels in lung, testis, kidney and brain.

Its subcellular location is the early endosome membrane. Its function is as follows. Activating adapter involved in cargo sorting from early/recycling endosomes. Regulates retrieval of proteins from endosomes to the trans-Golgi network through interaction with the dynein-dynactin complex. Dual effector of RAB4B and RAB14, mediates a cooperative interaction allowing endosomal tethering and fusion. Binds phospholipid vesicles containing phosphatidylinositol 3-phosphate and participates in early endosomal trafficking. In oocytes, self-assembles to form a protein matrix which hold together endolysosomes, autophagosomes and proteasomes and generate non-membrane-bound compartments called endo-lysosomal vesicular assemblies (ELVAs). In immature oocytes, ELVAs sequester ubiquitinated protein aggregates and degrade them upon oocyte maturation. The sequence is that of RUN and FYVE domain-containing protein 1 from Homo sapiens (Human).